The primary structure comprises 596 residues: Arginine--tRNA ligase (596 aa).

Residues Ala135–Gly145 carry the 'HIGH' region motif. Residues Pro227–Glu249 are disordered.

The protein belongs to the class-I aminoacyl-tRNA synthetase family. As to quaternary structure, monomer.

It is found in the cytoplasm. It carries out the reaction tRNA(Arg) + L-arginine + ATP = L-arginyl-tRNA(Arg) + AMP + diphosphate. The sequence is that of Arginine--tRNA ligase from Bifidobacterium adolescentis (strain ATCC 15703 / DSM 20083 / NCTC 11814 / E194a).